Reading from the N-terminus, the 284-residue chain is 2,3,4,5-tetrahydropyridine-2,6-dicarboxylate N-succinyltransferase (284 aa).

2 residues coordinate substrate: Arg-111 and Asp-148.

This sequence belongs to the transferase hexapeptide repeat family. In terms of assembly, homotrimer.

It localises to the cytoplasm. The catalysed reaction is (S)-2,3,4,5-tetrahydrodipicolinate + succinyl-CoA + H2O = (S)-2-succinylamino-6-oxoheptanedioate + CoA. Its pathway is amino-acid biosynthesis; L-lysine biosynthesis via DAP pathway; LL-2,6-diaminopimelate from (S)-tetrahydrodipicolinate (succinylase route): step 1/3. This chain is 2,3,4,5-tetrahydropyridine-2,6-dicarboxylate N-succinyltransferase, found in Ehrlichia ruminantium (strain Gardel).